Here is a 559-residue protein sequence, read N- to C-terminus: MSNKNNDELQRQASENTLGLNPVIGIRRKDLLSSARTVLRQAVRQPLHSAKHVAHFGLELKNVLLGKSSLAPESDDRRFNDPAWSNNPLYRRYLQTYLAWRKELQDWIGNSDLSPQDISRGQFVINLMTEAMAPTNTLSNPAAVKRFFETGGKSLLDGLSNLAKDLVNNGGMPSQVNMDAFEVGKNLGTSEGAVVYRNDVLELIQYKPITEQVHARPLLVVPPQINKFYVFDLSPEKSLARYCLRSQQQTFIISWRNPTKAQREWGLSTYIDALKEAVDAVLAITGSKDLNMLGACSGGITCTALVGHYAALGENKVNALTLLVSVLDTTMDNQVALFVDEQTLEAAKRHSYQAGVLEGSEMAKVFAWMRPNDLIWNYWVNNYLLGNEPPVFDILFWNNDTTRLPAAFHGDLIEMFKSNPLTRPDALEVCGTPIDLKQVKCDIYSLAGTNDHITPWQSCYRSAHLFGGKIEFVLSNSGHIQSILNPPGNPKARFMTGADRPGDPVAWQENATKHADSWWLHWQSWLGERAGELEKAPTRLGNRAYAAGEASPGTYVHER.

The active site involves C296.

Belongs to the PHA/PHB synthase family. Type II PhaC subfamily.

It participates in biopolymer metabolism; poly-(R)-3-hydroxybutanoate biosynthesis. In terms of biological role, synthesizes poly(3-hydroxyalkanoates) (PHA), complements a mutant of P.putida that does not make PHA. This chain is Poly(3-hydroxyalkanoate) polymerase 1, found in Ectopseudomonas oleovorans (Pseudomonas oleovorans).